Reading from the N-terminus, the 313-residue chain is MMRRTLLHSFATLLLSLSLWSAAVMAAVTTQVTVVTNVAGALVTETTIWDPATAAAAATTTAQTGFFTTVFTTTNDVGTTVTLTQTVNRATMLPTTTTSTSSTGKTTTTVPTATSSLSSGLYLSTVTTTNDLGTTVTLTQTFTHSSTSATSSASSSVSSSVSSSGSSSSVKTTTSTGSAVAETGTRPDPSTDFTEPPVSAVTSLSIDSYITITEGTTSTYTTTRAPTSMWVTVVRQGNTITVQTTFVQRFSSQYVTVASPSVGSIGMGTLTGTVGVIKSAIKKTVSHNEAQHLGMSSFTSILGGLLTVLIWFL.

The N-terminal stretch at 1 to 26 (MMRRTLLHSFATLLLSLSLWSAAVMA) is a signal peptide. Repeat unit 1 spans residues 72-86 (TTTNDVGTTVTLTQT). The segment at 72–141 (TTTNDVGTTV…LGTTVTLTQT (70 aa)) is 2 X approximate repeats. Residues 94–114 (PTTTTSTSSTGKTTTTVPTAT) are disordered. Repeat 2 spans residues 127–141 (TTTNDLGTTVTLTQT). The segment covering 147–181 (TSATSSASSSVSSSVSSSGSSSSVKTTTSTGSAVA) has biased composition (low complexity). Residues 147–198 (TSATSSASSSVSSSVSSSGSSSSVKTTTSTGSAVAETGTRPDPSTDFTEPPV) form a disordered region. A lipid anchor (GPI-anchor amidated asparagine) is attached at Asn-288. Residues 289–313 (EAQHLGMSSFTSILGGLLTVLIWFL) constitute a propeptide, removed in mature form.

Belongs to the KRE1 family. Extensively modified; probably through addition of O-linked mannose residues. In terms of processing, the GPI-anchor is attached to the protein in the endoplasmic reticulum and serves to target the protein to the cell surface. There, the glucosamine-inositol phospholipid moiety is cleaved off and the GPI-modified mannoprotein is covalently attached via its lipidless GPI glycan remnant to the 1,6-beta-glucan of the outer cell wall layer.

The protein localises to the cell membrane. It is found in the secreted. It localises to the cell wall. Functionally, involved in a late stage of cell wall 1,6-beta-glucan synthesis and assembly. Has a structural, rather than enzymic, function within cell wall 1,6-beta-glucan assembly and architecture, possibly by being involved in covalently cross-linking 1,6-beta-glucans to other cell wall components such as 1,3-beta-glucan, chitin and certain mannoproteins. Acts as the plasma membrane receptor for the yeast K1 viral toxin. This is Protein KRE1 (KRE1) from Saccharomyces cerevisiae (strain ATCC 204508 / S288c) (Baker's yeast).